The primary structure comprises 296 residues: Putative gluconeogenesis factor (296 aa).

This sequence belongs to the gluconeogenesis factor family.

The protein resides in the cytoplasm. In terms of biological role, required for morphogenesis under gluconeogenic growth conditions. This is Putative gluconeogenesis factor from Vibrio cholerae serotype O1 (strain ATCC 39315 / El Tor Inaba N16961).